The following is a 427-amino-acid chain: ATP-dependent RNA helicase DDX39A (427 aa).

Positions 1-19 (MAEQDVENELLDYDEDEEP) are enriched in acidic residues. The disordered stretch occupies residues 1–36 (MAEQDVENELLDYDEDEEPQAPQESTPAPPKKDVKG). N-acetylalanine is present on Ala-2. Lys-31 is covalently cross-linked (Glycyl lysine isopeptide (Lys-Gly) (interchain with G-Cter in SUMO2)). Lys-35 is modified (N6-acetyllysine; alternate). Lys-35 participates in a covalent cross-link: Glycyl lysine isopeptide (Lys-Gly) (interchain with G-Cter in SUMO2); alternate. Residue Ser-37 is modified to Phosphoserine. Positions 44-72 (SGFRDFLLKPELLRAIVDCGFEHPSEVQH) match the Q motif motif. In terms of domain architecture, Helicase ATP-binding spans 75–248 (IPQAILGMDV…RKFMQDPMEV (174 aa)). An ATP-binding site is contributed by 88–95 (AKSGMGKT). Residues Lys-154 and Lys-162 each participate in a glycyl lysine isopeptide (Lys-Gly) (interchain with G-Cter in SUMO2) cross-link. Thr-171 carries the phosphothreonine modification. The DECD box motif lies at 195–198 (DECD). Glycyl lysine isopeptide (Lys-Gly) (interchain with G-Cter in SUMO2) cross-links involve residues Lys-240 and Lys-255. One can recognise a Helicase C-terminal domain in the interval 260–421 (GLQQYYVKLK…ELPEEIDIST (162 aa)). Position 426 is a phosphoserine (Ser-426).

The protein belongs to the DEAD box helicase family. DECD subfamily. In terms of assembly, binds ALYREF/THOC4 and DDX39B/BAT1. Interacts with the apo-AREX complex component SARNP. Interacts with MX1. Interacts with MCM3AP isoform GANP. Interacts with ECD. Interacts with PHAX; this interaction stimulates PHAX RNA binding activity. Post-translationally, SUMOylated by RANBP2; SUMOylation modification affects its ability to bind RNA.

It is found in the nucleus. The protein resides in the cytoplasm. It catalyses the reaction ATP + H2O = ADP + phosphate + H(+). Functionally, helicase that plays an essential role in mRNA export and is involved in multiple steps in RNA metabolism including alternative splicing. Regulates nuclear mRNA export to the cytoplasm through association with ECD. Also involved in spliceosomal uridine-rich small nuclear RNA (U snRNA) export by stimulating the RNA binding of adapter PHAX. Plays a role in the negative regulation of type I IFN production by increasing the nuclear retention of antiviral transcripts and thus reducing their protein expression. Independently of the interferon pathway, plays an antiviral role against alphaviruses by binding to a 5' conserved sequence element in the viral genomic RNA. The polypeptide is ATP-dependent RNA helicase DDX39A (Mus musculus (Mouse)).